A 396-amino-acid chain; its full sequence is Lipid-A-disaccharide synthase (396 aa).

It belongs to the LpxB family.

The enzyme catalyses a lipid X + a UDP-2-N,3-O-bis[(3R)-3-hydroxyacyl]-alpha-D-glucosamine = a lipid A disaccharide + UDP + H(+). The protein operates within bacterial outer membrane biogenesis; LPS lipid A biosynthesis. In terms of biological role, condensation of UDP-2,3-diacylglucosamine and 2,3-diacylglucosamine-1-phosphate to form lipid A disaccharide, a precursor of lipid A, a phosphorylated glycolipid that anchors the lipopolysaccharide to the outer membrane of the cell. This Nitrobacter hamburgensis (strain DSM 10229 / NCIMB 13809 / X14) protein is Lipid-A-disaccharide synthase.